Consider the following 404-residue polypeptide: MLKCKQPGARFIHGAVHLPSGQIVFHTIHSPTLASALGLPGENVPIPALFRASGLNVRESLPMTNMRAPIISLARLILAPNPYILEGQLTVGMTQDNGIPVLFARPVIEVKSGPESNIKASSQLMIAEDSCLNQIAPFSASEHPAFSMVESVKRVRVDEGANTRRTIRDILEIPVTVLSSLQLSPTKSILKKAPEPPPPEPQATFDAAPYARIFYDIGRQVPKLGNAPAAQVSNVLIANRSHNSLRLVPNPDLLPLQHLYLKHVVLKSLNLENIVQDFEAIFTSPSDTISEAETKAFEKLVEQAKNTVENIVFCLNSICSTSTLPDVVPDVNNPNISLALEKYFLMFPPSGTIMRNVRFATPIVRLLCQGAELGTMAQFLGKYIKVKKETGMYTLVKLYYLLRI.

This sequence belongs to the lymphocryptovirus BTRF1 family.

This is an uncharacterized protein from Homo sapiens (Human).